The primary structure comprises 180 residues: Acireductone dioxygenase (180 aa).

4 residues coordinate Fe(2+): H97, H99, E103, and H141. Residues H97, H99, E103, and H141 each coordinate Ni(2+).

It belongs to the acireductone dioxygenase (ARD) family. Monomer. Fe(2+) serves as cofactor. The cofactor is Ni(2+).

It catalyses the reaction 1,2-dihydroxy-5-(methylsulfanyl)pent-1-en-3-one + O2 = 3-(methylsulfanyl)propanoate + CO + formate + 2 H(+). It carries out the reaction 1,2-dihydroxy-5-(methylsulfanyl)pent-1-en-3-one + O2 = 4-methylsulfanyl-2-oxobutanoate + formate + 2 H(+). It functions in the pathway amino-acid biosynthesis; L-methionine biosynthesis via salvage pathway; L-methionine from S-methyl-5-thio-alpha-D-ribose 1-phosphate: step 5/6. Functionally, catalyzes 2 different reactions between oxygen and the acireductone 1,2-dihydroxy-3-keto-5-methylthiopentene (DHK-MTPene) depending upon the metal bound in the active site. Fe-containing acireductone dioxygenase (Fe-ARD) produces formate and 2-keto-4-methylthiobutyrate (KMTB), the alpha-ketoacid precursor of methionine in the methionine recycle pathway. Ni-containing acireductone dioxygenase (Ni-ARD) produces methylthiopropionate, carbon monoxide and formate, and does not lie on the methionine recycle pathway. The chain is Acireductone dioxygenase from Yersinia enterocolitica serotype O:8 / biotype 1B (strain NCTC 13174 / 8081).